We begin with the raw amino-acid sequence, 350 residues long: Serine-threonine kinase receptor-associated protein (350 aa).

WD repeat units follow at residues 12-56 (GHTR…GTFL), 57-96 (GHKG…ELMT), 98-137 (AHKH…AEPK), 141-179 (GHTS…EVKS), 180-212 (LNFN…HSAV), 221-262 (EAPA…ESYK), and 263-302 (GHFG…TYGL). A phosphoserine mark is found at serine 312, serine 335, and serine 338. A disordered region spans residues 326–350 (AEEELEEIASENSDSIYSSTPEVKA). Positions 337–350 (NSDSIYSSTPEVKA) are enriched in polar residues. Tyrosine 342 carries the phosphotyrosine modification.

This sequence belongs to the WD repeat STRAP family. In terms of assembly, part of the core SMN complex that contains SMN1, GEMIN2/SIP1, DDX20/GEMIN3, GEMIN4, GEMIN5, GEMIN6, GEMIN7, GEMIN8 and STRAP/UNRIP. Part of the SMN-Sm complex that contains SMN1, GEMIN2/SIP1, DDX20/GEMIN3, GEMIN4, GEMIN5, GEMIN6, GEMIN7, GEMIN8, STRAP/UNRIP and the Sm proteins SNRPB, SNRPD1, SNRPD2, SNRPD3, SNRPE, SNRPF and SNRPG. Interacts directly with GEMIN6 and GEMIN7. Associates with the SMN complex in the cytoplasm but not in the nucleus. Also interacts with CSDE1/UNR and MAWBP. Interacts with PDPK1. Interacts with TRIM48.

The protein resides in the cytoplasm. It localises to the nucleus. The SMN complex catalyzes the assembly of small nuclear ribonucleoproteins (snRNPs), the building blocks of the spliceosome, and thereby plays an important role in the splicing of cellular pre-mRNAs. Most spliceosomal snRNPs contain a common set of Sm proteins SNRPB, SNRPD1, SNRPD2, SNRPD3, SNRPE, SNRPF and SNRPG that assemble in a heptameric protein ring on the Sm site of the small nuclear RNA to form the core snRNP (Sm core). In the cytosol, the Sm proteins SNRPD1, SNRPD2, SNRPE, SNRPF and SNRPG are trapped in an inactive 6S pICln-Sm complex by the chaperone CLNS1A that controls the assembly of the core snRNP. To assemble core snRNPs, the SMN complex accepts the trapped 5Sm proteins from CLNS1A forming an intermediate. Binding of snRNA inside 5Sm triggers eviction of the SMN complex, thereby allowing binding of SNRPD3 and SNRPB to complete assembly of the core snRNP. STRAP plays a role in the cellular distribution of the SMN complex. Negatively regulates TGF-beta signaling but positively regulates the PDPK1 kinase activity by enhancing its autophosphorylation and by significantly reducing the association of PDPK1 with 14-3-3 protein. This is Serine-threonine kinase receptor-associated protein (Strap) from Mus musculus (Mouse).